Here is a 153-residue protein sequence, read N- to C-terminus: UPF0768 protein PB2B2.18 (153 aa).

It belongs to the UPF0768 family.

The sequence is that of UPF0768 protein PB2B2.18 from Schizosaccharomyces pombe (strain 972 / ATCC 24843) (Fission yeast).